The primary structure comprises 123 residues: Large ribosomal subunit protein eL8 (123 aa).

This sequence belongs to the eukaryotic ribosomal protein eL8 family. As to quaternary structure, part of the 50S ribosomal subunit. Probably part of the RNase P complex.

The protein localises to the cytoplasm. Its function is as follows. Multifunctional RNA-binding protein that recognizes the K-turn motif in ribosomal RNA, the RNA component of RNase P, box H/ACA, box C/D and box C'/D' sRNAs. The chain is Large ribosomal subunit protein eL8 from Thermococcus gammatolerans (strain DSM 15229 / JCM 11827 / EJ3).